The sequence spans 184 residues: Casparian strip membrane protein 3 (184 aa).

Topologically, residues 1–24 are cytoplasmic; sequence MEGSEEHGETSKAPLSRGVSKGVS. The helical transmembrane segment at 25–45 threads the bilayer; that stretch reads ILDVILRFVAIIGTLASAIAM. Topologically, residues 46 to 72 are extracellular; that stretch reads GTTNQTLPFFTQFIRFKAQYSDLPTLT. Asn49 carries an N-linked (GlcNAc...) asparagine glycan. The chain crosses the membrane as a helical span at residues 73 to 93; the sequence is FFVVANSIVSAYLILSLPLSI. At 94–105 the chain is on the cytoplasmic side; sequence VHVIRSRAKYSR. A helical membrane pass occupies residues 106–126; it reads LILIFFDAAMLALVTAGASAA. Residues 127-159 are Extracellular-facing; the sequence is AAIVYLAHKGNARANWLAICQQFDSFCERISGS. The helical transmembrane segment at 160–180 threads the bilayer; the sequence is LIGSFAAMVVLVLLIFLSAIA. The Cytoplasmic segment spans residues 181–184; sequence LARR.

The protein belongs to the Casparian strip membrane proteins (CASP) family. As to quaternary structure, homodimer and heterodimers.

The protein localises to the cell membrane. Its function is as follows. Regulates membrane-cell wall junctions and localized cell wall deposition. Required for establishment of the Casparian strip membrane domain (CSD) and the subsequent formation of Casparian strips, a cell wall modification of the root endodermis that determines an apoplastic barrier between the intraorganismal apoplasm and the extraorganismal apoplasm and prevents lateral diffusion. The sequence is that of Casparian strip membrane protein 3 from Oryza sativa subsp. indica (Rice).